Consider the following 186-residue polypeptide: Transcription factor FapR (186 aa).

It belongs to the FapR family.

Its function is as follows. Transcriptional factor involved in regulation of membrane lipid biosynthesis by repressing genes involved in fatty acid and phospholipid metabolism. This chain is Transcription factor FapR, found in Staphylococcus epidermidis (strain ATCC 35984 / DSM 28319 / BCRC 17069 / CCUG 31568 / BM 3577 / RP62A).